The chain runs to 916 residues: Oxoglutarate dehydrogenase (916 aa).

This sequence belongs to the alpha-ketoglutarate dehydrogenase family. In terms of assembly, homodimer. Part of the 2-oxoglutarate dehydrogenase (OGDH) complex composed of E1 (2-oxoglutarate dehydrogenase), E2 (dihydrolipoamide succinyltransferase) and E3 (dihydrolipoamide dehydrogenase); the complex contains multiple copies of the three enzymatic components (E1, E2 and E3). Thiamine diphosphate is required as a cofactor.

The enzyme catalyses N(6)-[(R)-lipoyl]-L-lysyl-[protein] + 2-oxoglutarate + H(+) = N(6)-[(R)-S(8)-succinyldihydrolipoyl]-L-lysyl-[protein] + CO2. E1 component of the 2-oxoglutarate dehydrogenase (OGDH) complex which catalyzes the decarboxylation of 2-oxoglutarate, the first step in the conversion of 2-oxoglutarate to succinyl-CoA and CO(2). This chain is Oxoglutarate dehydrogenase (sucA), found in Buchnera aphidicola subsp. Baizongia pistaciae (strain Bp).